The following is a 159-amino-acid chain: ATP synthase subunit b (159 aa).

Residues 2–22 (EFNLVTIGFTIVNFIILMLIL) traverse the membrane as a helical segment.

The protein belongs to the ATPase B chain family. In terms of assembly, F-type ATPases have 2 components, F(1) - the catalytic core - and F(0) - the membrane proton channel. F(1) has five subunits: alpha(3), beta(3), gamma(1), delta(1), epsilon(1). F(0) has three main subunits: a(1), b(2) and c(10-14). The alpha and beta chains form an alternating ring which encloses part of the gamma chain. F(1) is attached to F(0) by a central stalk formed by the gamma and epsilon chains, while a peripheral stalk is formed by the delta and b chains.

The protein localises to the cell membrane. Functionally, f(1)F(0) ATP synthase produces ATP from ADP in the presence of a proton or sodium gradient. F-type ATPases consist of two structural domains, F(1) containing the extramembraneous catalytic core and F(0) containing the membrane proton channel, linked together by a central stalk and a peripheral stalk. During catalysis, ATP synthesis in the catalytic domain of F(1) is coupled via a rotary mechanism of the central stalk subunits to proton translocation. In terms of biological role, component of the F(0) channel, it forms part of the peripheral stalk, linking F(1) to F(0). The sequence is that of ATP synthase subunit b from Clostridium acetobutylicum (strain ATCC 824 / DSM 792 / JCM 1419 / IAM 19013 / LMG 5710 / NBRC 13948 / NRRL B-527 / VKM B-1787 / 2291 / W).